Consider the following 441-residue polypeptide: Protein arginine methyltransferase NDUFAF7, mitochondrial (441 aa).

The transit peptide at 1–46 directs the protein to the mitochondrion; that stretch reads MNFLAAAGVRRLCAMRAVLPCLWRGKYFSSGNEPAENNTVTPMLRH. Positions 415 to 434 are disordered; it reads GRNHQTNARQSKPSPSPVAG. A compositionally biased stretch (polar residues) spans 418 to 427; sequence HQTNARQSKP.

The protein belongs to the NDUFAF7 family. As to quaternary structure, interacts with NDUFS2.

The protein localises to the mitochondrion. The catalysed reaction is L-arginyl-[protein] + 2 S-adenosyl-L-methionine = N(omega),N(omega)'-dimethyl-L-arginyl-[protein] + 2 S-adenosyl-L-homocysteine + 2 H(+). Functionally, arginine methyltransferase involved in the assembly or stability of mitochondrial NADH:ubiquinone oxidoreductase complex (complex I). Acts by mediating symmetric dimethylation of 'Arg-118' of NDUFS2 after it assembles into the complex I, stabilizing the early intermediate complex. In Bos taurus (Bovine), this protein is Protein arginine methyltransferase NDUFAF7, mitochondrial.